Consider the following 67-residue polypeptide: Bowman-Birk type proteinase inhibitor A4 (67 aa).

Intrachain disulfides connect cysteine 10–cysteine 29, cysteine 16–cysteine 27, cysteine 36–cysteine 43, and cysteine 40–cysteine 57.

Belongs to the Bowman-Birk serine protease inhibitor family. In terms of tissue distribution, expressed in bulb (at protein level).

In terms of biological role, serine protease inhibitor. Inhibits trypsin (Ki=12nM) and weakly inhibits chymotrypsin with (Ki=460nm). Does not inhibit bacterial subtilisin. This Hyacinthus orientalis (Common hyacinth) protein is Bowman-Birk type proteinase inhibitor A4.